Here is a 1412-residue protein sequence, read N- to C-terminus: DNA-directed RNA polymerase subunit beta' (1412 aa).

Zn(2+)-binding residues include Cys70, Cys72, Cys85, and Cys88. Mg(2+)-binding residues include Asp460, Asp462, and Asp464. Zn(2+) contacts are provided by Cys819, Cys893, Cys900, and Cys903. The interval 1393–1412 (EAFEFGTPSAPAEEPQHPAE) is disordered.

This sequence belongs to the RNA polymerase beta' chain family. The RNAP catalytic core consists of 2 alpha, 1 beta, 1 beta' and 1 omega subunit. When a sigma factor is associated with the core the holoenzyme is formed, which can initiate transcription. Requires Mg(2+) as cofactor. Zn(2+) serves as cofactor.

It carries out the reaction RNA(n) + a ribonucleoside 5'-triphosphate = RNA(n+1) + diphosphate. Its function is as follows. DNA-dependent RNA polymerase catalyzes the transcription of DNA into RNA using the four ribonucleoside triphosphates as substrates. The sequence is that of DNA-directed RNA polymerase subunit beta' from Burkholderia mallei (strain NCTC 10229).